Consider the following 188-residue polypeptide: Elongation factor P (188 aa).

The protein belongs to the elongation factor P family.

Its subcellular location is the cytoplasm. It functions in the pathway protein biosynthesis; polypeptide chain elongation. Functionally, involved in peptide bond synthesis. Stimulates efficient translation and peptide-bond synthesis on native or reconstituted 70S ribosomes in vitro. Probably functions indirectly by altering the affinity of the ribosome for aminoacyl-tRNA, thus increasing their reactivity as acceptors for peptidyl transferase. This chain is Elongation factor P, found in Nitrosospira multiformis (strain ATCC 25196 / NCIMB 11849 / C 71).